The chain runs to 287 residues: Nucleotide-binding protein HD_0584 (287 aa).

Gly-8–Ser-15 provides a ligand contact to ATP. Asp-56–Asn-59 serves as a coordination point for GTP.

It belongs to the RapZ-like family.

Displays ATPase and GTPase activities. The chain is Nucleotide-binding protein HD_0584 from Haemophilus ducreyi (strain 35000HP / ATCC 700724).